A 189-amino-acid polypeptide reads, in one-letter code: MYVSIEGIDTAGKSTQLNILEKTFPNAIFTKEPGGTALGIKLRAMALGGEAKSSIAEMFLFLADRAEHIEEVIKPNKNSLVISDRSVVSGIAYANQFEIDKLIELNLIATSNILPTHIILLELTPEELKFRLSQKANDSIELRGIDYLINIQNRMKETIKKLNVNHIFIDASLKIEDIAKTIEDFLNVK.

Position 7-14 (7-14 (GIDTAGKS)) interacts with ATP.

It belongs to the thymidylate kinase family.

It catalyses the reaction dTMP + ATP = dTDP + ADP. Its function is as follows. Phosphorylation of dTMP to form dTDP in both de novo and salvage pathways of dTTP synthesis. The chain is Thymidylate kinase from Aliarcobacter butzleri (strain RM4018) (Arcobacter butzleri).